The sequence spans 183 residues: Adenine phosphoribosyltransferase (183 aa).

This sequence belongs to the purine/pyrimidine phosphoribosyltransferase family. Homodimer.

It localises to the cytoplasm. The catalysed reaction is AMP + diphosphate = 5-phospho-alpha-D-ribose 1-diphosphate + adenine. Its pathway is purine metabolism; AMP biosynthesis via salvage pathway; AMP from adenine: step 1/1. Its function is as follows. Catalyzes a salvage reaction resulting in the formation of AMP, that is energically less costly than de novo synthesis. The sequence is that of Adenine phosphoribosyltransferase from Shewanella sp. (strain ANA-3).